The sequence spans 122 residues: Large ribosomal subunit protein uL14 (122 aa).

It belongs to the universal ribosomal protein uL14 family. In terms of assembly, part of the 50S ribosomal subunit. Forms a cluster with proteins L3 and L19. In the 70S ribosome, L14 and L19 interact and together make contacts with the 16S rRNA in bridges B5 and B8.

Binds to 23S rRNA. Forms part of two intersubunit bridges in the 70S ribosome. This is Large ribosomal subunit protein uL14 from Laribacter hongkongensis (strain HLHK9).